Consider the following 71-residue polypeptide: Small ribosomal subunit protein bS21 (71 aa).

This sequence belongs to the bacterial ribosomal protein bS21 family.

The chain is Small ribosomal subunit protein bS21 from Shewanella piezotolerans (strain WP3 / JCM 13877).